The sequence spans 156 residues: Small ribosomal subunit protein uS7 (156 aa).

This sequence belongs to the universal ribosomal protein uS7 family. Part of the 30S ribosomal subunit. Contacts proteins S9 and S11.

One of the primary rRNA binding proteins, it binds directly to 16S rRNA where it nucleates assembly of the head domain of the 30S subunit. Is located at the subunit interface close to the decoding center, probably blocks exit of the E-site tRNA. In Methylocella silvestris (strain DSM 15510 / CIP 108128 / LMG 27833 / NCIMB 13906 / BL2), this protein is Small ribosomal subunit protein uS7.